Reading from the N-terminus, the 131-residue chain is Large ribosomal subunit protein bL17 (131 aa).

Belongs to the bacterial ribosomal protein bL17 family. In terms of assembly, part of the 50S ribosomal subunit. Contacts protein L32.

The polypeptide is Large ribosomal subunit protein bL17 (Methylacidiphilum infernorum (isolate V4) (Methylokorus infernorum (strain V4))).